Reading from the N-terminus, the 280-residue chain is Retinoschisin (280 aa).

The signal sequence occupies residues 1 to 23 (MHLPREAFLLALAGAFIFPSSQQ). The region spanning 119 to 275 (CPYHRPLGFE…IALRLELLLC (157 aa)) is the F5/8 type C domain. Cystine bridges form between Cys-119-Cys-275 and Cys-166-Cys-198.

Homooctamer of 4 homodimers; disulfide-linked. The homooctamer has a flat, cogwheel structure with a diameter of about 14 nm. Two stacked octamers can assemble to form a hexadecamer.

It localises to the secreted. The protein resides in the cell membrane. In terms of biological role, binds negatively charged membrane lipids, such as phosphatidylserine and phosphoinositides. May play a role in cell-cell adhesion processes in the retina, via homomeric interaction between octamers present on the surface of two neighboring cells. Required for normal structure and function of the retina. The sequence is that of Retinoschisin (xlrs1) from Takifugu rubripes (Japanese pufferfish).